The following is a 380-amino-acid chain: Queuine tRNA-ribosyltransferase (380 aa).

Residue Asp95 is the Proton acceptor of the active site. Residues 95 to 99, Asp149, Gln192, and Gly219 each bind substrate; that span reads DSGGF. Positions 250-256 are RNA binding; it reads GVGSPDS. The active-site Nucleophile is the Asp269. The tract at residues 274-278 is RNA binding; important for wobble base 34 recognition; sequence TRIGR. Positions 307, 309, 312, and 338 each coordinate Zn(2+).

This sequence belongs to the queuine tRNA-ribosyltransferase family. Homodimer. Within each dimer, one monomer is responsible for RNA recognition and catalysis, while the other monomer binds to the replacement base PreQ1. It depends on Zn(2+) as a cofactor.

The enzyme catalyses 7-aminomethyl-7-carbaguanine + guanosine(34) in tRNA = 7-aminomethyl-7-carbaguanosine(34) in tRNA + guanine. Its pathway is tRNA modification; tRNA-queuosine biosynthesis. Functionally, catalyzes the base-exchange of a guanine (G) residue with the queuine precursor 7-aminomethyl-7-deazaguanine (PreQ1) at position 34 (anticodon wobble position) in tRNAs with GU(N) anticodons (tRNA-Asp, -Asn, -His and -Tyr). Catalysis occurs through a double-displacement mechanism. The nucleophile active site attacks the C1' of nucleotide 34 to detach the guanine base from the RNA, forming a covalent enzyme-RNA intermediate. The proton acceptor active site deprotonates the incoming PreQ1, allowing a nucleophilic attack on the C1' of the ribose to form the product. After dissociation, two additional enzymatic reactions on the tRNA convert PreQ1 to queuine (Q), resulting in the hypermodified nucleoside queuosine (7-(((4,5-cis-dihydroxy-2-cyclopenten-1-yl)amino)methyl)-7-deazaguanosine). The sequence is that of Queuine tRNA-ribosyltransferase from Geobacillus thermodenitrificans (strain NG80-2).